The primary structure comprises 431 residues: UDP-N-acetylglucosamine 1-carboxyvinyltransferase (431 aa).

Residue 22–23 participates in phosphoenolpyruvate binding; it reads KN. Arg-102 lines the UDP-N-acetyl-alpha-D-glucosamine pocket. The active-site Proton donor is Cys-126. Cys-126 carries the 2-(S-cysteinyl)pyruvic acid O-phosphothioketal modification. Residues Asp-318 and Ile-340 each contribute to the UDP-N-acetyl-alpha-D-glucosamine site.

This sequence belongs to the EPSP synthase family. MurA subfamily.

The protein localises to the cytoplasm. The enzyme catalyses phosphoenolpyruvate + UDP-N-acetyl-alpha-D-glucosamine = UDP-N-acetyl-3-O-(1-carboxyvinyl)-alpha-D-glucosamine + phosphate. The protein operates within cell wall biogenesis; peptidoglycan biosynthesis. In terms of biological role, cell wall formation. Adds enolpyruvyl to UDP-N-acetylglucosamine. In Bartonella tribocorum (strain CIP 105476 / IBS 506), this protein is UDP-N-acetylglucosamine 1-carboxyvinyltransferase.